The primary structure comprises 1368 residues: DNA-directed RNA polymerase subunit beta (1368 aa).

The protein belongs to the RNA polymerase beta chain family. The RNAP catalytic core consists of 2 alpha, 1 beta, 1 beta' and 1 omega subunit. When a sigma factor is associated with the core the holoenzyme is formed, which can initiate transcription.

The catalysed reaction is RNA(n) + a ribonucleoside 5'-triphosphate = RNA(n+1) + diphosphate. DNA-dependent RNA polymerase catalyzes the transcription of DNA into RNA using the four ribonucleoside triphosphates as substrates. This chain is DNA-directed RNA polymerase subunit beta, found in Burkholderia mallei (strain SAVP1).